A 338-amino-acid chain; its full sequence is Glycerol-3-phosphate dehydrogenase [NAD(P)+] (338 aa).

Residues Trp-14, Tyr-50, and Lys-110 each coordinate NADPH. Sn-glycerol 3-phosphate contacts are provided by Lys-110, Gly-141, and Ser-143. NADPH is bound at residue Ala-145. Lys-196, Asp-249, Ser-259, Arg-260, and Asn-261 together coordinate sn-glycerol 3-phosphate. The active-site Proton acceptor is the Lys-196. Arg-260 contributes to the NADPH binding site. Glu-285 provides a ligand contact to NADPH.

It belongs to the NAD-dependent glycerol-3-phosphate dehydrogenase family.

The protein localises to the cytoplasm. The enzyme catalyses sn-glycerol 3-phosphate + NAD(+) = dihydroxyacetone phosphate + NADH + H(+). It catalyses the reaction sn-glycerol 3-phosphate + NADP(+) = dihydroxyacetone phosphate + NADPH + H(+). It participates in membrane lipid metabolism; glycerophospholipid metabolism. Its function is as follows. Catalyzes the reduction of the glycolytic intermediate dihydroxyacetone phosphate (DHAP) to sn-glycerol 3-phosphate (G3P), the key precursor for phospholipid synthesis. In Malacoplasma penetrans (strain HF-2) (Mycoplasma penetrans), this protein is Glycerol-3-phosphate dehydrogenase [NAD(P)+].